The chain runs to 538 residues: Atos homolog protein B (538 aa).

Residues 1–18 are compositionally biased toward low complexity; sequence MRHVQAEPSPSSEPEAGP. Disordered regions lie at residues 1–103, 153–185, 197–300, and 323–342; these read MRHV…GLLG, NTLH…QLHT, GGKS…VLDP, and SLRK…VPTP. The segment covering 227 to 238 has biased composition (pro residues); sequence HTPPGPGPPGPC. 2 positions are modified to phosphoserine: S254 and S255. Residues 323–334 are compositionally biased toward low complexity; it reads SLRKGPGLLSPP. The interval 348–430 is required for macropage invasion; the sequence is LLGSFEESLL…VPKVGTIQVT (83 aa). The tract at residues 436 to 444 is transactivation domain 1 (TAD1); the sequence is QTVVKMFLV.

Belongs to the ATOS family.

The protein localises to the nucleus. Its function is as follows. Transcription regulator that may syncronize transcriptional and translational programs. This is Atos homolog protein B from Pongo abelii (Sumatran orangutan).